We begin with the raw amino-acid sequence, 530 residues long: Phosphoenolpyruvate carboxykinase (ATP) (530 aa).

3 residues coordinate substrate: R58, Y195, and K201. Residues K201, H220, and 236-244 (GLSGTGKTT) each bind ATP. K201 and H220 together coordinate Mn(2+). D257 contributes to the Mn(2+) binding site. Residues E285, R321, 440 to 441 (RI), and T446 each bind ATP. R321 serves as a coordination point for substrate.

It belongs to the phosphoenolpyruvate carboxykinase (ATP) family. Mn(2+) is required as a cofactor.

It is found in the cytoplasm. The catalysed reaction is oxaloacetate + ATP = phosphoenolpyruvate + ADP + CO2. It participates in carbohydrate biosynthesis; gluconeogenesis. Involved in the gluconeogenesis. Catalyzes the conversion of oxaloacetate (OAA) to phosphoenolpyruvate (PEP) through direct phosphoryl transfer between the nucleoside triphosphate and OAA. This is Phosphoenolpyruvate carboxykinase (ATP) from Staphylococcus aureus (strain Mu3 / ATCC 700698).